The chain runs to 473 residues: Cysteine--tRNA ligase (473 aa).

C30 lines the Zn(2+) pocket. The 'HIGH' region signature appears at 32–42; sequence MTVYDYCHIGH. Positions 213, 238, and 242 each coordinate Zn(2+). The short motif at 270–274 is the 'KMSKS' region element; sequence KMSKS. K273 is a binding site for ATP.

It belongs to the class-I aminoacyl-tRNA synthetase family. Monomer. Zn(2+) serves as cofactor.

It is found in the cytoplasm. The enzyme catalyses tRNA(Cys) + L-cysteine + ATP = L-cysteinyl-tRNA(Cys) + AMP + diphosphate. In Acinetobacter baylyi (strain ATCC 33305 / BD413 / ADP1), this protein is Cysteine--tRNA ligase.